A 289-amino-acid polypeptide reads, in one-letter code: 2-dehydro-3-deoxyphosphooctonate aldolase (289 aa).

Belongs to the KdsA family.

It localises to the cytoplasm. It catalyses the reaction D-arabinose 5-phosphate + phosphoenolpyruvate + H2O = 3-deoxy-alpha-D-manno-2-octulosonate-8-phosphate + phosphate. It participates in carbohydrate biosynthesis; 3-deoxy-D-manno-octulosonate biosynthesis; 3-deoxy-D-manno-octulosonate from D-ribulose 5-phosphate: step 2/3. The protein operates within bacterial outer membrane biogenesis; lipopolysaccharide biosynthesis. This Cupriavidus necator (strain ATCC 17699 / DSM 428 / KCTC 22496 / NCIMB 10442 / H16 / Stanier 337) (Ralstonia eutropha) protein is 2-dehydro-3-deoxyphosphooctonate aldolase.